A 75-amino-acid polypeptide reads, in one-letter code: Translation initiation factor IF-1 (75 aa).

The S1-like domain occupies 1–75 (MANLPKEQKL…SKGRIVYRFK (75 aa)).

Belongs to the IF-1 family. In terms of assembly, component of the 30S ribosomal translation pre-initiation complex which assembles on the 30S ribosome in the order IF-2 and IF-3, IF-1 and N-formylmethionyl-tRNA(fMet); mRNA recruitment can occur at any time during PIC assembly.

It localises to the cytoplasm. One of the essential components for the initiation of protein synthesis. Stabilizes the binding of IF-2 and IF-3 on the 30S subunit to which N-formylmethionyl-tRNA(fMet) subsequently binds. Helps modulate mRNA selection, yielding the 30S pre-initiation complex (PIC). Upon addition of the 50S ribosomal subunit IF-1, IF-2 and IF-3 are released leaving the mature 70S translation initiation complex. In Mesomycoplasma hyopneumoniae (strain 232) (Mycoplasma hyopneumoniae), this protein is Translation initiation factor IF-1.